A 391-amino-acid chain; its full sequence is Tryptophan synthase beta chain (391 aa).

K84 is modified (N6-(pyridoxal phosphate)lysine).

It belongs to the TrpB family. As to quaternary structure, tetramer of two alpha and two beta chains. Requires pyridoxal 5'-phosphate as cofactor.

It carries out the reaction (1S,2R)-1-C-(indol-3-yl)glycerol 3-phosphate + L-serine = D-glyceraldehyde 3-phosphate + L-tryptophan + H2O. Its pathway is amino-acid biosynthesis; L-tryptophan biosynthesis; L-tryptophan from chorismate: step 5/5. In terms of biological role, the beta subunit is responsible for the synthesis of L-tryptophan from indole and L-serine. The chain is Tryptophan synthase beta chain from Thermoanaerobacter sp. (strain X514).